A 90-amino-acid chain; its full sequence is Probable Fe(2+)-trafficking protein (90 aa).

This sequence belongs to the Fe(2+)-trafficking protein family.

Its function is as follows. Could be a mediator in iron transactions between iron acquisition and iron-requiring processes, such as synthesis and/or repair of Fe-S clusters in biosynthetic enzymes. The sequence is that of Probable Fe(2+)-trafficking protein from Xylella fastidiosa (strain 9a5c).